Reading from the N-terminus, the 359-residue chain is Peptide chain release factor 1 (359 aa).

At Gln-235 the chain carries N5-methylglutamine.

Belongs to the prokaryotic/mitochondrial release factor family. Methylated by PrmC. Methylation increases the termination efficiency of RF1.

The protein resides in the cytoplasm. In terms of biological role, peptide chain release factor 1 directs the termination of translation in response to the peptide chain termination codons UAG and UAA. This Polynucleobacter necessarius subsp. necessarius (strain STIR1) protein is Peptide chain release factor 1.